Consider the following 490-residue polypeptide: Glycogen synthase kinase-3 alpha (490 aa).

Over residues 1–15 (MSGGGPSGGGPGGSG) the composition is skewed to gly residues. The interval 1-97 (MSGGGPSGGG…PPGVKLGRDS (97 aa)) is disordered. Ser-2 carries the post-translational modification N-acetylserine. At Ser-2 the chain carries Phosphoserine. Ser-21 is subject to Phosphoserine; by PKB/AKT1. The span at 25-82 (PGGGGGGGGGGPGGSASGPGGTGGGKASVGAMGGGVGASSSGGGPSGSGGGGSGGPGA) shows a compositional bias: gly residues. Residues Ser-72, Ser-77, and Ser-97 each carry the phosphoserine modification. The 286-residue stretch at 119 to 404 (YTDIKVIGNG…PLEACAHSFF (286 aa)) folds into the Protein kinase domain. Residues 125 to 133 (IGNGSFGVV) and Lys-148 contribute to the ATP site. Asp-244 serves as the catalytic Proton acceptor. Phosphotyrosine is present on Tyr-279. Residues 451 to 490 (GPASPLTTSYNPSSQALTEAQTGQDWQPSDATTATLASSS) are disordered. The segment covering 455–480 (PLTTSYNPSSQALTEAQTGQDWQPSD) has biased composition (polar residues). Residues 481-490 (ATTATLASSS) are compositionally biased toward low complexity.

It belongs to the protein kinase superfamily. CMGC Ser/Thr protein kinase family. GSK-3 subfamily. As to quaternary structure, monomer. Interacts with AXIN1 and CTNNB1/beta-catenin. Interacts with ARRB2. Interacts with CTNND2. Interacts with LMBR1L. Interacts with DDX3X. Interacts with TNFRSF10B. In terms of processing, phosphorylated by AKT1 at Ser-21: upon insulin-mediated signaling, the activated PKB/AKT1 protein kinase phosphorylates and deactivates GSK3A, resulting in the dephosphorylation and activation of GYS1. Activated by phosphorylation at Tyr-279.

It carries out the reaction L-seryl-[tau protein] + ATP = O-phospho-L-seryl-[tau protein] + ADP + H(+). The enzyme catalyses L-threonyl-[tau protein] + ATP = O-phospho-L-threonyl-[tau protein] + ADP + H(+). It catalyses the reaction L-seryl-[protein] + ATP = O-phospho-L-seryl-[protein] + ADP + H(+). The catalysed reaction is L-threonyl-[protein] + ATP = O-phospho-L-threonyl-[protein] + ADP + H(+). With respect to regulation, activated by phosphorylation at Tyr-279. In response to insulin, inhibited by phosphorylation at Ser-21 by PKB/AKT1; phosphorylation at this site causes a conformational change, preventing access of substrates to the active site. Inhibited by lithium. Its function is as follows. Constitutively active protein kinase that acts as a negative regulator in the hormonal control of glucose homeostasis, Wnt signaling and regulation of transcription factors and microtubules, by phosphorylating and inactivating glycogen synthase (GYS1 or GYS2), CTNNB1/beta-catenin, APC and AXIN1. Requires primed phosphorylation of the majority of its substrates. Contributes to insulin regulation of glycogen synthesis by phosphorylating and inhibiting GYS1 activity and hence glycogen synthesis. Regulates glycogen metabolism in liver, but not in muscle. May also mediate the development of insulin resistance by regulating activation of transcription factors. In Wnt signaling, regulates the level and transcriptional activity of nuclear CTNNB1/beta-catenin. Facilitates amyloid precursor protein (APP) processing and the generation of APP-derived amyloid plaques found in Alzheimer disease. May be involved in the regulation of replication in pancreatic beta-cells. Is necessary for the establishment of neuronal polarity and axon outgrowth. Through phosphorylation of the anti-apoptotic protein MCL1, may control cell apoptosis in response to growth factors deprivation. Acts as a regulator of autophagy by mediating phosphorylation of KAT5/TIP60 under starvation conditions, activating KAT5/TIP60 acetyltransferase activity and promoting acetylation of key autophagy regulators, such as ULK1 and RUBCNL/Pacer. Negatively regulates extrinsic apoptotic signaling pathway via death domain receptors. Promotes the formation of an anti-apoptotic complex, made of DDX3X, BRIC2 and GSK3B, at death receptors, including TNFRSF10B. The anti-apoptotic function is most effective with weak apoptotic signals and can be overcome by stronger stimulation. This chain is Glycogen synthase kinase-3 alpha (Gsk3a), found in Mus musculus (Mouse).